A 60-amino-acid polypeptide reads, in one-letter code: Cecropin-B type 1 (60 aa).

The signal sequence occupies residues 1 to 24 (MNFNKLFALVLLIGLVLLTGQTEA). Ile-58 carries the post-translational modification Isoleucine amide.

It belongs to the cecropin family.

Its subcellular location is the secreted. Cecropins have lytic and antibacterial activity against several Gram-positive and Gram-negative bacteria. This is Cecropin-B type 1 (CECB1) from Aedes albopictus (Asian tiger mosquito).